The primary structure comprises 466 residues: Adenosylhomocysteinase (466 aa).

T57, D132, and E192 together coordinate substrate. 193–195 (TTT) contacts NAD(+). Substrate contacts are provided by K222 and D226. NAD(+) contacts are provided by residues N227, 256 to 261 (GYGDVG), E279, N314, 335 to 337 (IGH), and N380.

The protein belongs to the adenosylhomocysteinase family. It depends on NAD(+) as a cofactor.

Its subcellular location is the cytoplasm. The enzyme catalyses S-adenosyl-L-homocysteine + H2O = L-homocysteine + adenosine. It functions in the pathway amino-acid biosynthesis; L-homocysteine biosynthesis; L-homocysteine from S-adenosyl-L-homocysteine: step 1/1. Its function is as follows. May play a key role in the regulation of the intracellular concentration of adenosylhomocysteine. The chain is Adenosylhomocysteinase from Brucella abortus (strain S19).